The primary structure comprises 254 residues: MEIDLNADLGEGCGSDEALLDLVTSANIACGWHAGGANAMRDCVRWAVQKGVSIGAHPSFHDPENFGRKEMQLPPGDIYAGVLYQLGALSAIAQAEGGRIAHVKPHGALYNQAARDPLIADAVVSAIHDFDPSLAVFGLANSVFIAAARQAGLAAVEEVFADRGYRADGSLVPRSLPGALIDDEDAVLARTLDMVRNRQVRALSGEWVPLNAQTVCLHGDGPHALAFAKRIRAALEAAGVDVVAPGALQADEGA.

The protein belongs to the LamB/PxpA family. Forms a complex composed of PxpA, PxpB and PxpC.

It carries out the reaction 5-oxo-L-proline + ATP + 2 H2O = L-glutamate + ADP + phosphate + H(+). Its function is as follows. Catalyzes the cleavage of 5-oxoproline to form L-glutamate coupled to the hydrolysis of ATP to ADP and inorganic phosphate. The protein is 5-oxoprolinase subunit A of Burkholderia orbicola (strain MC0-3).